An 86-amino-acid polypeptide reads, in one-letter code: Alpha-toxin TbTx5 (86 aa).

The N-terminal stretch at 1 to 19 (MNDFVFLVVACLLTAGTEG) is a signal peptide. The region spanning 21 to 82 (KDGYPVEGDN…EPTKTNGRCK (62 aa)) is the LCN-type CS-alpha/beta domain. Cystine bridges form between Cys-31–Cys-81, Cys-35–Cys-57, Cys-43–Cys-64, and Cys-47–Cys-66. Pro-83 is modified (proline amide).

This sequence belongs to the long (4 C-C) scorpion toxin superfamily. Sodium channel inhibitor family. Alpha subfamily. In terms of tissue distribution, expressed by the venom gland.

It localises to the secreted. Alpha toxins bind voltage-independently at site-3 of sodium channels (Nav) and inhibit the inactivation of the activated channels, thereby blocking neuronal transmission. This is Alpha-toxin TbTx5 from Tityus bahiensis (Brazilian scorpion).